A 54-amino-acid chain; its full sequence is uncharacterized protein (54 aa).

A helical transmembrane segment spans residues 6–26 (ILIYLLIFVAGIVIGKIRINV).

Its subcellular location is the host membrane. This is an uncharacterized protein from Acidianus convivator (ABV).